A 142-amino-acid polypeptide reads, in one-letter code: Large ribosomal subunit protein uL13 (142 aa).

Belongs to the universal ribosomal protein uL13 family. In terms of assembly, part of the 50S ribosomal subunit.

In terms of biological role, this protein is one of the early assembly proteins of the 50S ribosomal subunit, although it is not seen to bind rRNA by itself. It is important during the early stages of 50S assembly. In Pseudomonas putida (strain W619), this protein is Large ribosomal subunit protein uL13.